Here is a 139-residue protein sequence, read N- to C-terminus: GSK3B-interacting protein (139 aa).

The required for PRKAR2A interaction; contributes to a protective effect against H(2)O(2)-induced apoptosis stretch occupies residues 41-45; it reads VNDVL. The tract at residues 115-139 is interaction with GSK3B and acts as a GSK3B inhibitor; that stretch reads SPAYREAFGNALLQRLEALKRDGQS.

The protein belongs to the GSKIP family. As to quaternary structure, forms a complex composed of PRKAR2A or PRKAR2B, GSK3B and GSKIP through GSKIP interaction; facilitates PKA-induced phosphorylation of GSK3B leading to GSK3B inactivation; recruits DNM1L through GSK3B for PKA-mediated phosphorylation of DNM1L; promotes beta-catenin degradation through GSK3B-induced phosphorylation of beta-catenin; stabilizes beta-catenin and enhances Wnt-induced signaling through PKA-induced phosphorylation of beta-catenin. Interacts with GSK3B; induces GSK3B-mediated phosphorylation of GSKIP and inhibits GSK3B kinase activity. Post-translationally, phosphorylated by GSK3B.

Its subcellular location is the cytoplasm. It localises to the nucleus. In terms of biological role, A-kinase anchoring protein for GSK3B and PKA that regulates or facilitates their kinase activity towards their targets. The ternary complex enhances Wnt-induced signaling by facilitating the GSK3B- and PKA-induced phosphorylation of beta-catenin leading to beta-catenin degradation and stabilization respectively. Upon cAMP activation, the ternary complex contributes to neuroprotection against oxidative stress-induced apoptosis by facilitating the PKA-induced phosphorylation of DML1 and PKA-induced inactivation of GSK3B. During neurite outgrowth promotes neuron proliferation; while increases beta-catenin-induced transcriptional activity through GSK3B kinase activity inhibition, reduces N-cadherin level to promote cell cycle progression. May play a role in cleft palate formation and is required for postnatal life through modulation of the activity of GSK3B during development. In Mus musculus (Mouse), this protein is GSK3B-interacting protein.